A 302-amino-acid polypeptide reads, in one-letter code: Putative S-adenosyl-L-methionine-dependent methyltransferase MMAR_1068 (302 aa).

Residues aspartate 127 and 156-157 each bind S-adenosyl-L-methionine; that span reads DL.

This sequence belongs to the UPF0677 family.

Functionally, exhibits S-adenosyl-L-methionine-dependent methyltransferase activity. The sequence is that of Putative S-adenosyl-L-methionine-dependent methyltransferase MMAR_1068 from Mycobacterium marinum (strain ATCC BAA-535 / M).